The primary structure comprises 659 residues: tRNA 5-methylaminomethyl-2-thiouridine biosynthesis bifunctional protein MnmC (659 aa).

The tRNA (mnm(5)s(2)U34)-methyltransferase stretch occupies residues 1–236; sequence MKPVMPHAQL…KWEILRGEFL (236 aa). An FAD-dependent cmnm(5)s(2)U34 oxidoreductase region spans residues 267-659; that stretch reads IGAGLAGCAT…FALRRLIRGK (393 aa).

The protein in the N-terminal section; belongs to the methyltransferase superfamily. tRNA (mnm(5)s(2)U34)-methyltransferase family. In the C-terminal section; belongs to the DAO family. The cofactor is FAD.

The protein resides in the cytoplasm. It catalyses the reaction 5-aminomethyl-2-thiouridine(34) in tRNA + S-adenosyl-L-methionine = 5-methylaminomethyl-2-thiouridine(34) in tRNA + S-adenosyl-L-homocysteine + H(+). Its function is as follows. Catalyzes the last two steps in the biosynthesis of 5-methylaminomethyl-2-thiouridine (mnm(5)s(2)U) at the wobble position (U34) in tRNA. Catalyzes the FAD-dependent demodification of cmnm(5)s(2)U34 to nm(5)s(2)U34, followed by the transfer of a methyl group from S-adenosyl-L-methionine to nm(5)s(2)U34, to form mnm(5)s(2)U34. This chain is tRNA 5-methylaminomethyl-2-thiouridine biosynthesis bifunctional protein MnmC, found in Pseudomonas fluorescens (strain Pf0-1).